The chain runs to 228 residues: 30 kDa heat shock protein (228 aa).

3 disordered regions span residues 34–53, 117–136, and 144–174; these read EVQG…PTRT, KGEP…DVDE, and TATG…APAE. Residues 49 to 228 enclose the sHSP domain; that stretch reads QPTRTFSPKF…KHETIRIAIN (180 aa). Positions 144 to 158 are enriched in low complexity; sequence TATGANNQNNQQVAQ.

The protein belongs to the small heat shock protein (HSP20) family.

The protein localises to the cytoplasm. This chain is 30 kDa heat shock protein (hsp30), found in Neurospora crassa (strain ATCC 24698 / 74-OR23-1A / CBS 708.71 / DSM 1257 / FGSC 987).